Here is a 402-residue protein sequence, read N- to C-terminus: Phosphoglycerate kinase (402 aa).

Residues 24 to 26 (DLN), Arg-39, 62 to 65 (HLGR), Arg-121, and Arg-161 contribute to the substrate site. Residues Lys-211, Gly-299, Glu-330, and 359-362 (GGDS) each bind ATP.

Belongs to the phosphoglycerate kinase family. In terms of assembly, monomer.

It is found in the cytoplasm. It catalyses the reaction (2R)-3-phosphoglycerate + ATP = (2R)-3-phospho-glyceroyl phosphate + ADP. Its pathway is carbohydrate degradation; glycolysis; pyruvate from D-glyceraldehyde 3-phosphate: step 2/5. The sequence is that of Phosphoglycerate kinase from Mycolicibacterium gilvum (strain PYR-GCK) (Mycobacterium gilvum (strain PYR-GCK)).